We begin with the raw amino-acid sequence, 256 residues long: 5'-nucleotidase SurE (256 aa).

A divalent metal cation-binding residues include Asp-8, Asp-9, Ser-40, and Asn-92.

Belongs to the SurE nucleotidase family. A divalent metal cation is required as a cofactor.

The protein localises to the cytoplasm. It catalyses the reaction a ribonucleoside 5'-phosphate + H2O = a ribonucleoside + phosphate. In terms of biological role, nucleotidase that shows phosphatase activity on nucleoside 5'-monophosphates. The protein is 5'-nucleotidase SurE of Sinorhizobium fredii (strain NBRC 101917 / NGR234).